Reading from the N-terminus, the 446-residue chain is Deoxyguanosinetriphosphate triphosphohydrolase-like protein (446 aa).

The interval methionine 1–aspartate 28 is disordered. The span at glutamine 7–aspartate 28 shows a compositional bias: basic and acidic residues. The HD domain maps to arginine 59 to alanine 252.

It belongs to the dGTPase family. Type 2 subfamily.

This chain is Deoxyguanosinetriphosphate triphosphohydrolase-like protein, found in Shewanella sp. (strain MR-4).